The chain runs to 303 residues: Oxygen-dependent coproporphyrinogen-III oxidase (303 aa).

A substrate-binding site is contributed by Ser-93. A divalent metal cation-binding residues include His-97 and His-107. His-107 acts as the Proton donor in catalysis. Position 109-111 (Asn-109–Arg-111) interacts with substrate. Positions 146 and 176 each coordinate a divalent metal cation. The segment at Tyr-241–Gly-276 is important for dimerization. Residue Gly-259–Arg-261 participates in substrate binding.

It belongs to the aerobic coproporphyrinogen-III oxidase family. Homodimer. A divalent metal cation is required as a cofactor.

It is found in the cytoplasm. The enzyme catalyses coproporphyrinogen III + O2 + 2 H(+) = protoporphyrinogen IX + 2 CO2 + 2 H2O. It participates in porphyrin-containing compound metabolism; protoporphyrin-IX biosynthesis; protoporphyrinogen-IX from coproporphyrinogen-III (O2 route): step 1/1. Involved in the heme biosynthesis. Catalyzes the aerobic oxidative decarboxylation of propionate groups of rings A and B of coproporphyrinogen-III to yield the vinyl groups in protoporphyrinogen-IX. The sequence is that of Oxygen-dependent coproporphyrinogen-III oxidase from Pseudomonas entomophila (strain L48).